The following is a 114-amino-acid chain: Probable 4-amino-4-deoxy-L-arabinose-phosphoundecaprenol flippase subunit ArnE (114 aa).

3 helical membrane passes run 38-58 (LTLRWLAIAVVSLGLGMLLWL), 64-84 (LPLSVAYPMLSFNFVLVTLAA), and 94-114 (LRHWLGVAAIIFGILLMSWHL). Residues 43 to 112 (LAIAVVSLGL…IIFGILLMSW (70 aa)) enclose the EamA domain.

This sequence belongs to the ArnE family. In terms of assembly, heterodimer of ArnE and ArnF.

It is found in the cell inner membrane. It participates in bacterial outer membrane biogenesis; lipopolysaccharide biosynthesis. Functionally, translocates 4-amino-4-deoxy-L-arabinose-phosphoundecaprenol (alpha-L-Ara4N-phosphoundecaprenol) from the cytoplasmic to the periplasmic side of the inner membrane. In Yersinia pseudotuberculosis serotype O:1b (strain IP 31758), this protein is Probable 4-amino-4-deoxy-L-arabinose-phosphoundecaprenol flippase subunit ArnE.